Reading from the N-terminus, the 230-residue chain is NAD-dependent protein deacylase 1 (230 aa).

One can recognise a Deacetylase sirtuin-type domain in the interval 1 to 226; the sequence is MESGIPTYRE…SHLSAFLSRE (226 aa). Residues Tyr-41 and Arg-44 each coordinate substrate. 75–78 is an NAD(+) binding site; the sequence is QNID. The Proton acceptor role is filled by His-93. The Zn(2+) site is built by Cys-101, Cys-104, Cys-128, and Cys-131. NAD(+) contacts are provided by residues 168-170, 194-196, and Ala-212; these read GTS and NTV.

The protein belongs to the sirtuin family. Class III subfamily. The cofactor is Zn(2+).

Its subcellular location is the cytoplasm. The enzyme catalyses N(6)-acetyl-L-lysyl-[protein] + NAD(+) + H2O = 2''-O-acetyl-ADP-D-ribose + nicotinamide + L-lysyl-[protein]. It carries out the reaction N(6)-succinyl-L-lysyl-[protein] + NAD(+) + H2O = 2''-O-succinyl-ADP-D-ribose + nicotinamide + L-lysyl-[protein]. Functionally, NAD-dependent lysine deacetylase and desuccinylase that specifically removes acetyl and succinyl groups on target proteins. Modulates the activities of several proteins which are inactive in their acylated form. The polypeptide is NAD-dependent protein deacylase 1 (Pseudomonas syringae pv. tomato (strain ATCC BAA-871 / DC3000)).